The following is an 877-amino-acid chain: Protein SEY1 homolog (877 aa).

Residues 1–735 lie on the Cytoplasmic side of the membrane; sequence MVAFAGGART…LRSIEGEKQN (735 aa). The region spanning 49 to 307 is the GB1/RHD3-type G domain; that stretch reads GITYHVVGVL…VPLDGIPSYL (259 aa). 59–66 serves as a coordination point for GTP; that stretch reads GGQSSGKS. Positions 388 to 410 form a coiled coil; that stretch reads RIDIVRKTEAELEEELLKVELKL. The chain crosses the membrane as a helical span at residues 736 to 756; that stretch reads LPAWVLPVLLLLGWNEIWYVL. The Lumenal segment spans residues 757 to 759; the sequence is SSP. The chain crosses the membrane as a helical span at residues 760–780; it reads VLLVVVVIIAAVFLRGFLLTQ. Residues 781–877 lie on the Cytoplasmic side of the membrane; that stretch reads WAIFEETGPT…KEEEVPTQKE (97 aa). The interval 850 to 877 is disordered; the sequence is PTVLPPSTTSATLTRRLKKEEEVPTQKE. Basic and acidic residues predominate over residues 867–877; that stretch reads KKEEEVPTQKE.

It belongs to the TRAFAC class dynamin-like GTPase superfamily. GB1/RHD3 GTPase family. RHD3 subfamily.

It localises to the endoplasmic reticulum membrane. In terms of biological role, probable GTP-binding protein that may be involved in cell development. This is Protein SEY1 homolog from Trypanosoma cruzi (strain CL Brener).